Reading from the N-terminus, the 276-residue chain is Energy-coupling factor transporter ATP-binding protein EcfA2 (276 aa).

Residues 1-233 (MKTPFERLAL…GEEMAGWGLD (233 aa)) form the ABC transporter domain. 27–34 (GHTGSGKS) provides a ligand contact to ATP. Catalysis depends on E158, which acts as the Proton acceptor.

Belongs to the ABC transporter superfamily. Energy-coupling factor EcfA family. In terms of assembly, forms a stable energy-coupling factor (ECF) transporter complex composed of 2 membrane-embedded substrate-binding proteins (S component), 2 ATP-binding proteins (A component) and 2 transmembrane proteins (T component).

Its subcellular location is the cell membrane. Its function is as follows. ATP-binding (A) component of a common energy-coupling factor (ECF) ABC-transporter complex. Unlike classic ABC transporters this ECF transporter provides the energy necessary to transport a number of different substrates. The protein is Energy-coupling factor transporter ATP-binding protein EcfA2 of Bacillus subtilis (strain 168).